The primary structure comprises 123 residues: Small ribosomal subunit protein uS12 (123 aa).

It belongs to the universal ribosomal protein uS12 family. In terms of assembly, part of the 30S ribosomal subunit. Contacts proteins S8 and S17. May interact with IF1 in the 30S initiation complex.

With S4 and S5 plays an important role in translational accuracy. Its function is as follows. Interacts with and stabilizes bases of the 16S rRNA that are involved in tRNA selection in the A site and with the mRNA backbone. Located at the interface of the 30S and 50S subunits, it traverses the body of the 30S subunit contacting proteins on the other side and probably holding the rRNA structure together. The combined cluster of proteins S8, S12 and S17 appears to hold together the shoulder and platform of the 30S subunit. The protein is Small ribosomal subunit protein uS12 of Corynebacterium diphtheriae (strain ATCC 700971 / NCTC 13129 / Biotype gravis).